The following is a 329-amino-acid chain: Prostaglandin reductase 1 (329 aa).

Position 18 is a phosphothreonine (Thr-18). Ser-20 bears the Phosphoserine mark. NADP(+) contacts are provided by residues 152–155, Lys-178, Tyr-193, Asn-217, 239–245, 270–272, and Asn-321; these read GAVG, CGAISTY, and FVV. The residue at position 178 (Lys-178) is an N6-(2-hydroxyisobutyryl)lysine; alternate. Lys-178 carries the post-translational modification N6-acetyllysine; alternate.

It belongs to the NADP-dependent oxidoreductase L4BD family. Monomer or homodimer. In terms of tissue distribution, high expression in the kidney, liver, and intestine but not in leukocytes.

The protein resides in the cytoplasm. The enzyme catalyses 13,14-dihydro-15-oxo-prostaglandin E1 + NADP(+) = 15-oxoprostaglandin E1 + NADPH + H(+). The catalysed reaction is 13,14-dihydro-15-oxo-prostaglandin E2 + NADP(+) = 15-oxoprostaglandin E2 + NADPH + H(+). It carries out the reaction 13,14-dihydro-15-oxo-prostaglandin F1alpha + NADP(+) = 15-oxoprostaglandin F1alpha + NADPH + H(+). It catalyses the reaction 13,14-dihydro-15-oxo-PGF2alpha + NADP(+) = 15-oxoprostaglandin F2alpha + NADPH + H(+). The enzyme catalyses leukotriene B4 + NADP(+) = 12-oxo-leukotriene B4 + NADPH + H(+). The catalysed reaction is 20-hydroxy-leukotriene B4 + NADP(+) = 12-oxo-20-hydroxy-leukotriene B4 + NADPH + H(+). It carries out the reaction 6-trans-leukotriene B4 + NADP(+) = 12-oxo-(5S)-hydroxy-(6E,8E,10E,14Z)-eicosatetraenoate + NADPH + H(+). It catalyses the reaction (5S,12S)-dihydroxy-(6E,10E,12E,14Z)-eicosatetraenoate + NADP(+) = 12-oxo-(5S)-hydroxy-(6E,8E,10E,14Z)-eicosatetraenoate + NADPH + H(+). The enzyme catalyses an n-alkanal + NADP(+) = an alk-2-enal + NADPH + H(+). The catalysed reaction is hexanal + NADP(+) = (E)-hex-2-enal + NADPH + H(+). It carries out the reaction octanal + NADP(+) = (2E)-octenal + NADPH + H(+). It catalyses the reaction decanal + NADP(+) = (2E)-decenal + NADPH + H(+). The enzyme catalyses dodecanal + NADP(+) = (2E)-dodecenal + NADPH + H(+). The catalysed reaction is 4-hydroxynonanal + NADP(+) = (E)-4-hydroxynon-2-enal + NADPH + H(+). It carries out the reaction pentan-2-one + NADP(+) = (E)-pent-3-en-2-one + NADPH + H(+). It catalyses the reaction nonan-2-one + NADP(+) = (3E)-nonen-2-one + NADPH + H(+). Its function is as follows. NAD(P)H-dependent oxidoreductase involved in metabolic inactivation of pro- and anti-inflammatory eicosanoids: prostaglandins (PG), leukotrienes (LT) and lipoxins (LX). Catalyzes with high efficiency the reduction of the 13,14 double bond of 15-oxoPGs, including 15-oxo-PGE1, 15-oxo-PGE2, 15-oxo-PGF1-alpha and 15-oxo-PGF2-alpha. Catalyzes with lower efficiency the oxidation of the hydroxyl group at C12 of LTB4 and its derivatives, converting them into biologically less active 12-oxo-LTB4 metabolites. Reduces 15-oxo-LXA4 to 13,14 dihydro-15-oxo-LXA4, enhancing neutrophil recruitment at the inflammatory site. May play a role in metabolic detoxification of alkenals and ketones. Reduces alpha,beta-unsaturated alkenals and ketones, particularly those with medium-chain length, showing highest affinity toward (2E)-decenal and (3E)-3-nonen-2-one. May inactivate 4-hydroxy-2-nonenal, a cytotoxic lipid constituent of oxidized low-density lipoprotein particles. The chain is Prostaglandin reductase 1 (PTGR1) from Homo sapiens (Human).